The sequence spans 306 residues: Glutaminase (306 aa).

Residues Ser64, Asn115, Glu159, Asn166, Tyr190, Tyr242, and Val260 each contribute to the substrate site.

Belongs to the glutaminase family. As to quaternary structure, homotetramer.

The enzyme catalyses L-glutamine + H2O = L-glutamate + NH4(+). The chain is Glutaminase from Vibrio cholerae serotype O1 (strain ATCC 39315 / El Tor Inaba N16961).